Consider the following 152-residue polypeptide: Arginine repressor (152 aa).

This sequence belongs to the ArgR family.

It localises to the cytoplasm. It participates in amino-acid biosynthesis; L-arginine biosynthesis [regulation]. Its function is as follows. Regulates arginine biosynthesis genes. The protein is Arginine repressor of Lactococcus lactis subsp. lactis (strain IL1403) (Streptococcus lactis).